Consider the following 1360-residue polypeptide: Zinc finger protein GLI1 (1360 aa).

The segment at 198 to 245 (DTIGSKRLEDGSEGDISSPASVGTQDPLLGLLDGRDDLEKDDGKHEPE) is disordered. The segment covering 230 to 245 (DGRDDLEKDDGKHEPE) has biased composition (basic and acidic residues). The segment at 250 to 275 (TNCHWESCTKEFDTQEHLVHHINNEH) adopts a C2H2-type 1 zinc-finger fold. The interval 298–306 (KAQYMLVVH) is interaction with DNA. 3 C2H2-type zinc fingers span residues 316 to 340 (HKCTFEGCNKAYSRLENLKTHLRSH), 346 to 371 (YVCEHEGCNKAFSNASDRAKHQNRTH), and 377 to 402 (YVCKIPGCTKRYTDPSSLRKHVKTVH). Interaction with DNA stretches follow at residues 360–365 (ASDRAK) and 390–396 (DPSSLRK). 4 disordered regions span residues 390–434 (DPSS…NVKG), 457–500 (ITLK…SFED), 718–740 (IIHPAQAPGAGIRRASDPARTGG), and 1120–1213 (YMNY…IQPQ). Low complexity predominate over residues 461 to 473 (SQPSPGGQSSCSS). Residues 474 to 496 (ERSPLGSTNNNDSGVEMNANTGG) are compositionally biased toward polar residues. Residues 1134–1143 (SPSSQDSQSS) show a composition bias toward low complexity. Residues 1173–1190 (RQHSVSSQSTYMGSPNQL) are compositionally biased toward polar residues.

This sequence belongs to the GLI C2H2-type zinc-finger protein family.

Its subcellular location is the cytoplasm. It is found in the nucleus. Functionally, acts as a transcriptional activator. Binds to the DNA consensus sequence 5'-GACCACCCA-3'. May regulate the transcription of specific genes during normal development. Mediates SHH signaling. Plays a role in cell proliferation and differentiation via its role in SHH signaling. This Xenopus laevis (African clawed frog) protein is Zinc finger protein GLI1 (gli1).